The following is a 393-amino-acid chain: Methylthioribose kinase (393 aa).

ATP-binding positions include asparagine 38, lysine 53, and glutamate 107–leucine 109. Position 225 (aspartate 225) interacts with substrate. Aspartate 242–glutamate 244 is a binding site for ATP. Substrate is bound at residue arginine 332.

Belongs to the methylthioribose kinase family. Homodimer.

The catalysed reaction is 5-(methylsulfanyl)-D-ribose + ATP = 5-(methylsulfanyl)-alpha-D-ribose 1-phosphate + ADP + H(+). Its pathway is amino-acid biosynthesis; L-methionine biosynthesis via salvage pathway; S-methyl-5-thio-alpha-D-ribose 1-phosphate from S-methyl-5'-thioadenosine (hydrolase route): step 2/2. In terms of biological role, catalyzes the phosphorylation of methylthioribose into methylthioribose-1-phosphate. The sequence is that of Methylthioribose kinase from Bacillus thuringiensis subsp. konkukian (strain 97-27).